The primary structure comprises 129 residues: UPF0212 protein Mbar_A2902 (129 aa).

The protein belongs to the UPF0212 family.

The polypeptide is UPF0212 protein Mbar_A2902 (Methanosarcina barkeri (strain Fusaro / DSM 804)).